The following is a 382-amino-acid chain: Methylthioribose-1-phosphate isomerase (382 aa).

Asp258 (proton donor) is an active-site residue.

It belongs to the eIF-2B alpha/beta/delta subunits family. MtnA subfamily.

The protein localises to the cytoplasm. It is found in the nucleus. It carries out the reaction 5-(methylsulfanyl)-alpha-D-ribose 1-phosphate = 5-(methylsulfanyl)-D-ribulose 1-phosphate. The protein operates within amino-acid biosynthesis; L-methionine biosynthesis via salvage pathway; L-methionine from S-methyl-5-thio-alpha-D-ribose 1-phosphate: step 1/6. Functionally, catalyzes the interconversion of methylthioribose-1-phosphate (MTR-1-P) into methylthioribulose-1-phosphate (MTRu-1-P). The protein is Methylthioribose-1-phosphate isomerase of Laccaria bicolor (strain S238N-H82 / ATCC MYA-4686) (Bicoloured deceiver).